The primary structure comprises 728 residues: Catalase-peroxidase 1 (728 aa).

The first 16 residues, 1 to 16 (MDKAQHTQGKCPVAHG), serve as a signal peptide directing secretion. A cross-link (tryptophyl-tyrosyl-methioninium (Trp-Tyr) (with M-251)) is located at residues 97–225 (WHSAGTYRMA…LAAVMMGLIY (129 aa)). Histidine 98 functions as the Proton acceptor in the catalytic mechanism. A cross-link (tryptophyl-tyrosyl-methioninium (Tyr-Met) (with W-97)) is located at residues 225–251 (YVNPEGVDGQPDPLKTAQDIRVTFERM). Residue histidine 266 coordinates heme b.

It belongs to the peroxidase family. Peroxidase/catalase subfamily. Homodimer or homotetramer. It depends on heme b as a cofactor. In terms of processing, formation of the three residue Trp-Tyr-Met cross-link is important for the catalase, but not the peroxidase activity of the enzyme.

It catalyses the reaction H2O2 + AH2 = A + 2 H2O. It carries out the reaction 2 H2O2 = O2 + 2 H2O. Bifunctional enzyme with both catalase and broad-spectrum peroxidase activity. This is Catalase-peroxidase 1 from Shewanella frigidimarina (strain NCIMB 400).